A 274-amino-acid chain; its full sequence is Formamidopyrimidine-DNA glycosylase (274 aa).

The active-site Schiff-base intermediate with DNA is Pro-2. The active-site Proton donor is the Glu-3. Lys-58 (proton donor; for beta-elimination activity) is an active-site residue. His-92 and Arg-111 together coordinate DNA. The FPG-type; degenerate zinc finger occupies 239–273; that stretch reads HVYGREGEPCERCGTIIEKIKVAQRGTHFCPLEQR. The Proton donor; for delta-elimination activity role is filled by Arg-263.

Belongs to the FPG family. Monomer. Zn(2+) serves as cofactor.

It catalyses the reaction Hydrolysis of DNA containing ring-opened 7-methylguanine residues, releasing 2,6-diamino-4-hydroxy-5-(N-methyl)formamidopyrimidine.. The enzyme catalyses 2'-deoxyribonucleotide-(2'-deoxyribose 5'-phosphate)-2'-deoxyribonucleotide-DNA = a 3'-end 2'-deoxyribonucleotide-(2,3-dehydro-2,3-deoxyribose 5'-phosphate)-DNA + a 5'-end 5'-phospho-2'-deoxyribonucleoside-DNA + H(+). Functionally, involved in base excision repair of DNA damaged by oxidation or by mutagenic agents. Acts as a DNA glycosylase that recognizes and removes damaged bases. Has a preference for oxidized purines, such as 7,8-dihydro-8-oxoguanine (8-oxoG). Has AP (apurinic/apyrimidinic) lyase activity and introduces nicks in the DNA strand. Cleaves the DNA backbone by beta-delta elimination to generate a single-strand break at the site of the removed base with both 3'- and 5'-phosphates. The sequence is that of Formamidopyrimidine-DNA glycosylase from Lactiplantibacillus plantarum (strain ATCC BAA-793 / NCIMB 8826 / WCFS1) (Lactobacillus plantarum).